An 87-amino-acid chain; its full sequence is DNA-directed RNA polymerase subunit omega (87 aa).

Belongs to the RNA polymerase subunit omega family. As to quaternary structure, the RNAP catalytic core consists of 2 alpha, 1 beta, 1 beta' and 1 omega subunit. When a sigma factor is associated with the core the holoenzyme is formed, which can initiate transcription.

It catalyses the reaction RNA(n) + a ribonucleoside 5'-triphosphate = RNA(n+1) + diphosphate. Its function is as follows. Promotes RNA polymerase assembly. Latches the N- and C-terminal regions of the beta' subunit thereby facilitating its interaction with the beta and alpha subunits. The chain is DNA-directed RNA polymerase subunit omega from Pseudomonas putida (strain ATCC 700007 / DSM 6899 / JCM 31910 / BCRC 17059 / LMG 24140 / F1).